The chain runs to 426 residues: GTPase HflX (426 aa).

The region spanning 198 to 365 is the Hflx-type G domain; that stretch reads PTVSLVGYTN…ALTERLSGEV (168 aa). Residues 204-211, 229-233, 251-254, 317-320, and 343-345 contribute to the GTP site; these read GYTNAGKS, FATLD, DTVG, NKID, and SAQ. Residues serine 211 and threonine 231 each coordinate Mg(2+).

The protein belongs to the TRAFAC class OBG-HflX-like GTPase superfamily. HflX GTPase family. Monomer. Associates with the 50S ribosomal subunit. This interaction occurs in the presence of GTP, GDP, ATP or ADP, but not in their absence. Mg(2+) is required as a cofactor.

Its subcellular location is the cytoplasm. With respect to regulation, intrinsic GTPase activity is very slow and can be stimulated by the presence of 50S ribosomal subunits or 70S ribosomes. GTPase activity is inhibited by ATP. In terms of biological role, GTPase that associates with the 50S ribosomal subunit and may have a role during protein synthesis or ribosome biogenesis. In vitro, also exhibits ATPase activity. The sequence is that of GTPase HflX from Escherichia coli (strain K12).